The chain runs to 766 residues: MGEICPRREDFDIDYILKNASLLEKVSLLAGYDFWHTAPLPRFNVPSVRVSDGPNGVRGTKFFDGVRAACLPCGTGLAATWDQSLLYDAGVLIGQDVYPTAAYIRGAQSTGVISTIKHFAANDQEHERISVNAVMSERALREVHLLPFQIAIADSAPGAVMTCYNKVNGQHLSESKEMLDGLLRREWGWKGLIMSDWFGTYSTAEALNAGLDLEMPGPTRLRGPLLELAISSRKVSRATLDERARTVLEFVQRARKAEVSAVESTRDFPEDRRLNRKLAADSIVLLKNESGLLPLNPQTLTSVALIGPNMKTAAFCGGGSASLQPYYSTSPYQGITSQLPPGVEVLYETGATSYAFIPELAASEVRTPEGQPGLGMRFYRDPPSVQERRVVEETIIQESSWQLMGFSNPELDRLFHADIEAELIAPATGPFQFGLAVYGSASLFLDDQLIIDNTTVQRGGTFFFGKGTLEETATVDLVQGQSYQIKVQFASGPSSKLVKPGVVNFGGGAGRLGMVQVVDPERAIARAVEAAKRADITILGVGLTRDHESEGFDRSHMDLPPAVASLVTAVLDVAPDAILLTQSGTPFSMLPWADLVKTHLHAWFGGNELGNGIADVLFGVVNPSGKLPLSFPRRIEDTPTYLNFGSERGQVTYGEGIYVGYKLLRKSPTSCALSIRVRSAPVHPCCFRSNSLLTRFVPQARFVVHLLCVLRFDGRHRVRYTECSKLGRRGRSGSSPAVYRGRSNNVVNRTSHQGAQRISKGGFAAR.

Asparagine 19 carries N-linked (GlcNAc...) asparagine glycosylation. Aspartate 196 is a catalytic residue. N-linked (GlcNAc...) asparagine glycans are attached at residues asparagine 288, asparagine 453, and asparagine 748. Residues 369–528 (EGQPGLGMRF…DPERAIARAV (160 aa)) form the PA14 domain. The segment at 726–766 (LGRRGRSGSSPAVYRGRSNNVVNRTSHQGAQRISKGGFAAR) is disordered. Residues 742-756 (RSNNVVNRTSHQGAQ) show a composition bias toward polar residues.

Belongs to the glycosyl hydrolase 3 family.

It localises to the secreted. It catalyses the reaction Hydrolysis of terminal, non-reducing beta-D-glucosyl residues with release of beta-D-glucose.. Its pathway is glycan metabolism; cellulose degradation. Beta-glucosidases are one of a number of cellulolytic enzymes involved in the degradation of cellulosic biomass. Catalyzes the last step releasing glucose from the inhibitory cellobiose. This is Probable beta-glucosidase K (bglK) from Aspergillus fumigatus (strain CBS 144.89 / FGSC A1163 / CEA10) (Neosartorya fumigata).